Consider the following 494-residue polypeptide: UPF0371 protein SSA_0208 (494 aa).

Belongs to the UPF0371 family.

This chain is UPF0371 protein SSA_0208, found in Streptococcus sanguinis (strain SK36).